Here is a 355-residue protein sequence, read N- to C-terminus: Alanine racemase (355 aa).

K34 acts as the Proton acceptor; specific for D-alanine in catalysis. Residue K34 is modified to N6-(pyridoxal phosphate)lysine. R133 serves as a coordination point for substrate. Y249 acts as the Proton acceptor; specific for L-alanine in catalysis. M297 is a substrate binding site.

Belongs to the alanine racemase family. It depends on pyridoxal 5'-phosphate as a cofactor.

It catalyses the reaction L-alanine = D-alanine. The protein operates within amino-acid biosynthesis; D-alanine biosynthesis; D-alanine from L-alanine: step 1/1. In terms of biological role, catalyzes the interconversion of L-alanine and D-alanine. May also act on other amino acids. The protein is Alanine racemase (alr) of Rickettsia conorii (strain ATCC VR-613 / Malish 7).